We begin with the raw amino-acid sequence, 234 residues long: MRLGMVIDLQKCVGCGGCSLACKTENNTNDGIHWSHHIATTEGTFPDVKYTYIPTLCNHCDDAPCVKVCPTGAMHKDKRGLTLQNNDECIGCKKCMNACPYGVISFNAATPHRRWQDDSEVVANGTVSPLMLLKRTGATATPNENPERGDTYPMIRPKRTTEKCTFCDHRLDKGLNPACVDACPSEARVIGDLDDPQSKVSQLIKLHKPMQLKPEAGTGPRVFYIRSFGVKTAY.

3 consecutive 4Fe-4S ferredoxin-type domains span residues 3 to 32 (LGMV…NDGI), 48 to 79 (VKYT…KDKR), and 80 to 109 (GLTL…FNAA). [4Fe-4S] cluster-binding residues include C12, C15, C18, C22, C57, C60, C65, C69, C89, C92, C95, C99, C164, C167, C179, and C183.

Heterodimer composed of one large subunit (ArrA) and one small subunit (ArrB). Requires [4Fe-4S] cluster as cofactor.

It is found in the periplasm. Phosphate is a competitive inhibitor. Functionally, component of the arsenate respiratory reductase (Arr) complex, which catalyzes the reduction of arsenate (As(V)) to arsenite (As(III)). ArrB is probably the electron transfer subunit. The periplasmic localization of this complex may allow the cell to couple arsenate reduction to energy production before arsenate can be transported to the cell cytoplasm and enter the ars detoxification pathway, an energy-requiring process. The chain is Arsenate respiratory reductase iron-sulfur subunit ArrB from Shewanella sp. (strain ANA-3).